A 538-amino-acid chain; its full sequence is Lipid scramblase CLPTM1L (538 aa).

Over 1–10 (MWSGRSSFTS) the chain is Cytoplasmic. Residues 11–31 (LVVGVFVVYVVHTCWVMYGIV) form a helical membrane-spanning segment. Over 32–284 (YTRPCSGHGR…VKGIFVDTNL (253 aa)) the chain is Extracellular. N-linked (GlcNAc...) asparagine glycosylation is found at Asn-91 and Asn-101. A helical membrane pass occupies residues 285–305 (YFLALTFFVAAFHLLFDFLAF). Topologically, residues 306-324 (KNDISFWKKKKSMIGMSTK) are cytoplasmic. Residues 325 to 341 (AVLWRCFSTVVIFLFLL) traverse the membrane as a helical segment. Topologically, residues 342 to 402 (DEQTSLPVLV…TEEYDAQAMK (61 aa)) are extracellular. Residues 403-423 (YLSYLLYPLCIGGAIYSLLNI) traverse the membrane as a helical segment. At 424–428 (KYKSW) the chain is on the cytoplasmic side. The chain crosses the membrane as a helical span at residues 429–449 (YSWLINSFVNGVYAFGFLFML). Residues 450 to 538 (PQLFVNYKMK…DTPQRKPHTD (89 aa)) lie on the Extracellular side of the membrane.

This sequence belongs to the CLPTM1 family.

It is found in the endoplasmic reticulum membrane. The catalysed reaction is a 6-(alpha-D-glucosaminyl)-1-(1,2-diacyl-sn-glycero-3-phospho)-1D-myo-inositol(in) = a 6-(alpha-D-glucosaminyl)-1-(1,2-diacyl-sn-glycero-3-phospho)-1D-myo-inositol(out). The enzyme catalyses 6-(alpha-D-glucosaminyl)-(1-octadecanoyl,2-(9Z)-octadecenoyl-sn-glycero-3-phospho)-1D-myo-inositol(in) = 6-(alpha-D-glucosaminyl)-(1-octadecanoyl,2-(9Z)-octadecenoyl-sn-glycero-3-phospho)-1D-myo-inositol(out). It catalyses the reaction a 1,2-diacyl-sn-glycero-3-phospho-(1D-myo-inositol)(in) = a 1,2-diacyl-sn-glycero-3-phospho-(1D-myo-inositol)(out). It carries out the reaction a 1,2-diacyl-sn-glycero-3-phosphocholine(in) = a 1,2-diacyl-sn-glycero-3-phosphocholine(out). The catalysed reaction is a 1,2-diacyl-sn-glycero-3-phosphoethanolamine(in) = a 1,2-diacyl-sn-glycero-3-phosphoethanolamine(out). Functionally, scramblase that mediates the translocation of glucosaminylphosphatidylinositol (alpha-D-GlcN-(1-6)-(1,2-diacyl-sn-glycero-3-phospho)-1D-myo-inositol, GlcN-PI) across the endoplasmic reticulum (ER) membrane, from the cytosolic leaflet to the luminal leaflet of the ER membrane, where it participates in the biosynthesis of glycosylphosphatidylinositol (GPI). GPI is a lipid glycoconjugate involved in post-translational modification of proteins. Can also translocate 1,2-diacyl-sn-glycero-3-phospho-(1D-myo-inositol) (phosphatidylinositol or PI), as well as several other phospholipids (1,2-diacyl-sn-glycero-3-phosphocholine, 1,2-diacyl-sn-glycero-3-phosphoethanolamine), and N-acetylglucosaminylphosphatidylinositol (GlcNAc-PI) in vitro. The protein is Lipid scramblase CLPTM1L (CLPTM1L) of Bos taurus (Bovine).